We begin with the raw amino-acid sequence, 227 residues long: Enolase-phosphatase E1 (227 aa).

It belongs to the HAD-like hydrolase superfamily. MasA/MtnC family. In terms of assembly, monomer. The cofactor is Mg(2+).

The enzyme catalyses 5-methylsulfanyl-2,3-dioxopentyl phosphate + H2O = 1,2-dihydroxy-5-(methylsulfanyl)pent-1-en-3-one + phosphate. It functions in the pathway amino-acid biosynthesis; L-methionine biosynthesis via salvage pathway; L-methionine from S-methyl-5-thio-alpha-D-ribose 1-phosphate: step 3/6. Its pathway is amino-acid biosynthesis; L-methionine biosynthesis via salvage pathway; L-methionine from S-methyl-5-thio-alpha-D-ribose 1-phosphate: step 4/6. Functionally, bifunctional enzyme that catalyzes the enolization of 2,3-diketo-5-methylthiopentyl-1-phosphate (DK-MTP-1-P) into the intermediate 2-hydroxy-3-keto-5-methylthiopentenyl-1-phosphate (HK-MTPenyl-1-P), which is then dephosphorylated to form the acireductone 1,2-dihydroxy-3-keto-5-methylthiopentene (DHK-MTPene). The sequence is that of Enolase-phosphatase E1 from Pseudomonas syringae pv. syringae (strain B728a).